The chain runs to 105 residues: uncharacterized protein (105 aa).

This is an uncharacterized protein from Paracoccus denitrificans.